Consider the following 180-residue polypeptide: NADH-quinone oxidoreductase subunit I (180 aa).

4Fe-4S ferredoxin-type domains follow at residues 48 to 80 and 90 to 119; these read IVLT…LQKS and EFFR…LTPD. Cys60, Cys63, Cys66, Cys70, Cys99, Cys102, Cys105, and Cys109 together coordinate [4Fe-4S] cluster. Over residues 161–174 the composition is skewed to basic and acidic residues; that stretch reads KPKGDAENEAKPID. Residues 161 to 180 are disordered; it reads KPKGDAENEAKPIDVKSLLP.

It belongs to the complex I 23 kDa subunit family. As to quaternary structure, NDH-1 is composed of 14 different subunits. Subunits NuoA, H, J, K, L, M, N constitute the membrane sector of the complex. It depends on [4Fe-4S] cluster as a cofactor.

Its subcellular location is the cell inner membrane. It carries out the reaction a quinone + NADH + 5 H(+)(in) = a quinol + NAD(+) + 4 H(+)(out). Its function is as follows. NDH-1 shuttles electrons from NADH, via FMN and iron-sulfur (Fe-S) centers, to quinones in the respiratory chain. The immediate electron acceptor for the enzyme in this species is believed to be ubiquinone. Couples the redox reaction to proton translocation (for every two electrons transferred, four hydrogen ions are translocated across the cytoplasmic membrane), and thus conserves the redox energy in a proton gradient. The sequence is that of NADH-quinone oxidoreductase subunit I from Aeromonas hydrophila subsp. hydrophila (strain ATCC 7966 / DSM 30187 / BCRC 13018 / CCUG 14551 / JCM 1027 / KCTC 2358 / NCIMB 9240 / NCTC 8049).